The sequence spans 108 residues: Large ribosomal subunit protein bL21c (108 aa).

The protein belongs to the bacterial ribosomal protein bL21 family. As to quaternary structure, part of the 50S ribosomal subunit.

It localises to the plastid. Its subcellular location is the chloroplast. In terms of biological role, this protein binds to 23S rRNA. This Cyanidium caldarium (Red alga) protein is Large ribosomal subunit protein bL21c.